Reading from the N-terminus, the 326-residue chain is Beta-ketoacyl-[acyl-carrier-protein] synthase III (326 aa).

Catalysis depends on residues Cys120 and His253. Positions 254–258 (QANIR) are ACP-binding. The active site involves Asn283.

It belongs to the thiolase-like superfamily. FabH family. Homodimer.

The protein localises to the cytoplasm. The enzyme catalyses malonyl-[ACP] + acetyl-CoA + H(+) = 3-oxobutanoyl-[ACP] + CO2 + CoA. Its pathway is lipid metabolism; fatty acid biosynthesis. Catalyzes the condensation reaction of fatty acid synthesis by the addition to an acyl acceptor of two carbons from malonyl-ACP. Catalyzes the first condensation reaction which initiates fatty acid synthesis and may therefore play a role in governing the total rate of fatty acid production. Possesses both acetoacetyl-ACP synthase and acetyl transacylase activities. Its substrate specificity determines the biosynthesis of branched-chain and/or straight-chain of fatty acids. The chain is Beta-ketoacyl-[acyl-carrier-protein] synthase III from Cupriavidus taiwanensis (strain DSM 17343 / BCRC 17206 / CCUG 44338 / CIP 107171 / LMG 19424 / R1) (Ralstonia taiwanensis (strain LMG 19424)).